The primary structure comprises 416 residues: Imidazolonepropionase (416 aa).

Histidine 78 and histidine 80 together coordinate Fe(3+). Positions 78 and 80 each coordinate Zn(2+). 3 residues coordinate 4-imidazolone-5-propanoate: arginine 87, tyrosine 150, and histidine 183. Tyrosine 150 is an N-formimidoyl-L-glutamate binding site. Histidine 248 provides a ligand contact to Fe(3+). Residue histidine 248 participates in Zn(2+) binding. 4-imidazolone-5-propanoate is bound at residue glutamine 251. Position 323 (aspartate 323) interacts with Fe(3+). Position 323 (aspartate 323) interacts with Zn(2+). Residues asparagine 325 and glycine 327 each contribute to the N-formimidoyl-L-glutamate site. A 4-imidazolone-5-propanoate-binding site is contributed by threonine 328.

The protein belongs to the metallo-dependent hydrolases superfamily. HutI family. It depends on Zn(2+) as a cofactor. Fe(3+) serves as cofactor.

It is found in the cytoplasm. The enzyme catalyses 4-imidazolone-5-propanoate + H2O = N-formimidoyl-L-glutamate. The protein operates within amino-acid degradation; L-histidine degradation into L-glutamate; N-formimidoyl-L-glutamate from L-histidine: step 3/3. In terms of biological role, catalyzes the hydrolytic cleavage of the carbon-nitrogen bond in imidazolone-5-propanoate to yield N-formimidoyl-L-glutamate. It is the third step in the universal histidine degradation pathway. The sequence is that of Imidazolonepropionase from Vibrio parahaemolyticus serotype O3:K6 (strain RIMD 2210633).